Consider the following 123-residue polypeptide: MNLKTTLLLIIGGGLGALARYYISGILPVYKDFPLGTLLVNSIASFILGYLYGLLFFGFEVSSEWRIFLGTGFCGGLSTFSTFSYETFSLLREGEYLLAFMNVVANVLVTITLVFLGFILARR.

4 helical membrane-spanning segments follow: residues 7–27, 39–59, 67–87, and 100–120; these read LLLI…SGIL, LVNS…FFGF, IFLG…SYET, and FMNV…GFIL. Residues glycine 75 and serine 78 each coordinate Na(+).

It belongs to the fluoride channel Fluc/FEX (TC 1.A.43) family.

It localises to the cell membrane. It catalyses the reaction fluoride(in) = fluoride(out). Na(+) is not transported, but it plays an essential structural role and its presence is essential for fluoride channel function. Its function is as follows. Fluoride-specific ion channel. Important for reducing fluoride concentration in the cell, thus reducing its toxicity. This is Fluoride-specific ion channel FluC from Pyrococcus abyssi (strain GE5 / Orsay).